A 955-amino-acid polypeptide reads, in one-letter code: 2-oxoglutarate dehydrogenase E1 component (955 aa).

The protein belongs to the alpha-ketoglutarate dehydrogenase family. Homodimer. Part of the 2-oxoglutarate dehydrogenase (OGDH) complex composed of E1 (2-oxoglutarate dehydrogenase), E2 (dihydrolipoamide succinyltransferase) and E3 (dihydrolipoamide dehydrogenase); the complex contains multiple copies of the three enzymatic components (E1, E2 and E3). Thiamine diphosphate serves as cofactor.

The enzyme catalyses N(6)-[(R)-lipoyl]-L-lysyl-[protein] + 2-oxoglutarate + H(+) = N(6)-[(R)-S(8)-succinyldihydrolipoyl]-L-lysyl-[protein] + CO2. E1 component of the 2-oxoglutarate dehydrogenase (OGDH) complex which catalyzes the decarboxylation of 2-oxoglutarate, the first step in the conversion of 2-oxoglutarate to succinyl-CoA and CO(2). The sequence is that of 2-oxoglutarate dehydrogenase E1 component from Bacillus cereus (strain 03BB102).